The chain runs to 230 residues: MKIGIIGAMAQEVEILLGYMAEPKLTEIAGCKIYEGKINNTDIALLQSGIGKTAAAMGTALLLQLTKPEMVINTGSAGGLDANLNVGDIVISTEVRHHDIDVTAFGYEKGQLPANPAAFMANEQLAQIAIKETEKAGFNAVSGLICSGDLFVNGNDMIARIRNDFPSVKAVEMEAASIAQVCHAFQVPFVVVRAISDVADKESHLSFDEFLPLAAEKSSEIVLAMLNNFA.

Residue glutamate 12 is the Proton acceptor of the active site. Substrate-binding positions include glycine 78, valine 152, and methionine 173–glutamate 174. Aspartate 197 functions as the Proton donor in the catalytic mechanism.

It belongs to the PNP/UDP phosphorylase family. MtnN subfamily.

The enzyme catalyses S-adenosyl-L-homocysteine + H2O = S-(5-deoxy-D-ribos-5-yl)-L-homocysteine + adenine. It catalyses the reaction S-methyl-5'-thioadenosine + H2O = 5-(methylsulfanyl)-D-ribose + adenine. It carries out the reaction 5'-deoxyadenosine + H2O = 5-deoxy-D-ribose + adenine. The protein operates within amino-acid biosynthesis; L-methionine biosynthesis via salvage pathway; S-methyl-5-thio-alpha-D-ribose 1-phosphate from S-methyl-5'-thioadenosine (hydrolase route): step 1/2. Functionally, catalyzes the irreversible cleavage of the glycosidic bond in both 5'-methylthioadenosine (MTA) and S-adenosylhomocysteine (SAH/AdoHcy) to adenine and the corresponding thioribose, 5'-methylthioribose and S-ribosylhomocysteine, respectively. Also cleaves 5'-deoxyadenosine, a toxic by-product of radical S-adenosylmethionine (SAM) enzymes, into 5-deoxyribose and adenine. In Glaesserella parasuis serovar 5 (strain SH0165) (Haemophilus parasuis), this protein is 5'-methylthioadenosine/S-adenosylhomocysteine nucleosidase.